Reading from the N-terminus, the 88-residue chain is Large ribosomal subunit protein eL37A (88 aa).

Zn(2+) contacts are provided by Cys19, Cys22, Cys34, and Cys37. A C4-type zinc finger spans residues 19 to 37 (CNRCGRRSFHVQKKTCSSC).

The protein belongs to the eukaryotic ribosomal protein eL37 family. As to quaternary structure, component of the large ribosomal subunit (LSU). Mature yeast ribosomes consist of a small (40S) and a large (60S) subunit. The 40S small subunit contains 1 molecule of ribosomal RNA (18S rRNA) and 33 different proteins (encoded by 57 genes). The large 60S subunit contains 3 rRNA molecules (25S, 5.8S and 5S rRNA) and 46 different proteins (encoded by 81 genes). It depends on Zn(2+) as a cofactor.

The protein resides in the cytoplasm. Its function is as follows. Component of the ribosome, a large ribonucleoprotein complex responsible for the synthesis of proteins in the cell. The small ribosomal subunit (SSU) binds messenger RNAs (mRNAs) and translates the encoded message by selecting cognate aminoacyl-transfer RNA (tRNA) molecules. The large subunit (LSU) contains the ribosomal catalytic site termed the peptidyl transferase center (PTC), which catalyzes the formation of peptide bonds, thereby polymerizing the amino acids delivered by tRNAs into a polypeptide chain. The nascent polypeptides leave the ribosome through a tunnel in the LSU and interact with protein factors that function in enzymatic processing, targeting, and the membrane insertion of nascent chains at the exit of the ribosomal tunnel. This is Large ribosomal subunit protein eL37A from Saccharomyces cerevisiae (strain ATCC 204508 / S288c) (Baker's yeast).